Consider the following 225-residue polypeptide: Chromosome partition protein MukE (225 aa).

The disordered stretch occupies residues 197–225 (RDGEAMPIENHLQLNDETEESQPDSGEEE). Over residues 212 to 225 (DETEESQPDSGEEE) the composition is skewed to acidic residues.

It belongs to the MukE family. In terms of assembly, interacts, and probably forms a ternary complex, with MukF and MukB. The complex formation is stimulated by calcium or magnesium.

It localises to the cytoplasm. The protein resides in the nucleoid. Functionally, involved in chromosome condensation, segregation and cell cycle progression. May participate in facilitating chromosome segregation by condensation DNA from both sides of a centrally located replisome during cell division. Probably acts via its interaction with MukB and MukF. In Salmonella typhi, this protein is Chromosome partition protein MukE.